Here is a 1064-residue protein sequence, read N- to C-terminus: Carbamoyl phosphate synthase pyrimidine-specific large chain (1064 aa).

Positions 1–401 (MPKRRDIETI…SLLKAVRSLE (401 aa)) are carboxyphosphate synthetic domain. Residues R129, R169, G175, G176, R208, I210, G241, I242, H243, Q284, and E298 each coordinate ATP. An ATP-grasp 1 domain is found at 133–327 (RALMNELGEP…IAKLAAKIAV (195 aa)). The Mg(2+) site is built by Q284, E298, and N300. Residues Q284, E298, and N300 each contribute to the Mn(2+) site. The oligomerization domain stretch occupies residues 402 to 546 (IGVHHLELNE…YSTYEEENES (145 aa)). The carbamoyl phosphate synthetic domain stretch occupies residues 547–929 (IVTEKPSVIV…ALYKGLVASG (383 aa)). Residues 671 to 861 (EQALSELGIP…MANLATKAIL (191 aa)) form the ATP-grasp 2 domain. ATP is bound by residues R707, R746, I748, E752, G777, V778, H779, S780, Q820, and E832. 3 residues coordinate Mg(2+): Q820, E832, and N834. Mn(2+) is bound by residues Q820, E832, and N834. The MGS-like domain maps to 930–1064 (IQIQPHGAVL…TAMTEGLVRS (135 aa)). An allosteric domain region spans residues 930-1064 (IQIQPHGAVL…TAMTEGLVRS (135 aa)).

This sequence belongs to the CarB family. As to quaternary structure, composed of two chains; the small (or glutamine) chain promotes the hydrolysis of glutamine to ammonia, which is used by the large (or ammonia) chain to synthesize carbamoyl phosphate. Tetramer of heterodimers (alpha,beta)4. The cofactor is Mg(2+). Mn(2+) serves as cofactor.

It carries out the reaction hydrogencarbonate + L-glutamine + 2 ATP + H2O = carbamoyl phosphate + L-glutamate + 2 ADP + phosphate + 2 H(+). The enzyme catalyses hydrogencarbonate + NH4(+) + 2 ATP = carbamoyl phosphate + 2 ADP + phosphate + 2 H(+). Its pathway is amino-acid biosynthesis; L-arginine biosynthesis; carbamoyl phosphate from bicarbonate: step 1/1. It participates in pyrimidine metabolism; UMP biosynthesis via de novo pathway; (S)-dihydroorotate from bicarbonate: step 1/3. Small subunit of the glutamine-dependent carbamoyl phosphate synthetase (CPSase). CPSase catalyzes the formation of carbamoyl phosphate from the ammonia moiety of glutamine, carbonate, and phosphate donated by ATP, constituting the first step of the biosynthetic pathway leading to pyrimidine nucleotides. The large subunit (synthetase) binds the substrates ammonia (free or transferred from glutamine from the small subunit), hydrogencarbonate and ATP and carries out an ATP-coupled ligase reaction, activating hydrogencarbonate by forming carboxy phosphate which reacts with ammonia to form carbamoyl phosphate. The sequence is that of Carbamoyl phosphate synthase pyrimidine-specific large chain (pyrAB) from Geobacillus stearothermophilus (Bacillus stearothermophilus).